We begin with the raw amino-acid sequence, 352 residues long: Photosystem II D2 protein (352 aa).

At threonine 2 the chain carries N-acetylthreonine. At threonine 2 the chain carries Phosphothreonine. A helical membrane pass occupies residues 40–60 (CAYFAVGGWLTGTTFVTSWYT). A chlorophyll a-binding site is contributed by histidine 117. A helical membrane pass occupies residues 124–140 (GFMLRQFEIARAIGLRP). Residues glutamine 129 and asparagine 142 each contribute to the pheophytin a site. A helical transmembrane segment spans residues 152–165 (VFVSVFLIYPLGQS). Chlorophyll a is bound at residue histidine 197. A helical membrane pass occupies residues 207 to 227 (AALLCAIHGATVENTLFEDGD). Positions 214 and 261 each coordinate a plastoquinone. Histidine 214 serves as a coordination point for Fe cation. Fe cation is bound at residue histidine 268. A helical transmembrane segment spans residues 278-294 (GLWMSAIGVVGLALNLR).

The protein belongs to the reaction center PufL/M/PsbA/D family. As to quaternary structure, PSII is composed of 1 copy each of membrane proteins PsbA, PsbB, PsbC, PsbD, PsbE, PsbF, PsbH, PsbI, PsbJ, PsbK, PsbL, PsbM, PsbT, PsbX, PsbY, PsbZ, Psb30/Ycf12, at least 3 peripheral proteins of the oxygen-evolving complex and a large number of cofactors. It forms dimeric complexes. It depends on The D1/D2 heterodimer binds P680, chlorophylls that are the primary electron donor of PSII, and subsequent electron acceptors. It shares a non-heme iron and each subunit binds pheophytin, quinone, additional chlorophylls, carotenoids and lipids. There is also a Cl(-1) ion associated with D1 and D2, which is required for oxygen evolution. The PSII complex binds additional chlorophylls, carotenoids and specific lipids. as a cofactor.

It localises to the plastid. Its subcellular location is the chloroplast thylakoid membrane. The enzyme catalyses 2 a plastoquinone + 4 hnu + 2 H2O = 2 a plastoquinol + O2. Photosystem II (PSII) is a light-driven water:plastoquinone oxidoreductase that uses light energy to abstract electrons from H(2)O, generating O(2) and a proton gradient subsequently used for ATP formation. It consists of a core antenna complex that captures photons, and an electron transfer chain that converts photonic excitation into a charge separation. The D1/D2 (PsbA/PsbD) reaction center heterodimer binds P680, the primary electron donor of PSII as well as several subsequent electron acceptors. D2 is needed for assembly of a stable PSII complex. In Nephroselmis olivacea (Green alga), this protein is Photosystem II D2 protein.